We begin with the raw amino-acid sequence, 372 residues long: Ligninase C (372 aa).

Positions 1–26 (MAFKSLLSFVSVIGALQGANAALTRR) are cleaved as a signal peptide. The active-site Proton acceptor is H74. Residues D75, G93, D95, and S97 each coordinate Ca(2+). A glycan (N-linked (GlcNAc...) asparagine) is linked at N129. H205 is a binding site for heme b. Ca(2+)-binding residues include T206, D223, T225, L228, and D230. Residues 346–372 (TPFPTFPTDPGPKTAVAPVPKPPAARK) form a disordered region.

This sequence belongs to the peroxidase family. Ligninase subfamily. It depends on Ca(2+) as a cofactor. Heme b is required as a cofactor.

It catalyses the reaction 1-(3,4-dimethoxyphenyl)-2-(2-methoxyphenoxy)propane-1,3-diol + H2O2 = 3,4-dimethoxybenzaldehyde + guaiacol + glycolaldehyde + H2O. It carries out the reaction 2 (3,4-dimethoxyphenyl)methanol + H2O2 = 2 (3,4-dimethoxyphenyl)methanol radical + 2 H2O. The protein operates within secondary metabolite metabolism; lignin degradation. Its function is as follows. Depolymerization of lignin. Catalyzes the C(alpha)-C(beta) cleavage of the propyl side chains of lignin. In Trametes versicolor (White-rot fungus), this protein is Ligninase C.